Here is a 129-residue protein sequence, read N- to C-terminus: Glycine cleavage system H protein (129 aa).

A Lipoyl-binding domain is found at 24-106; sequence IATIGISAFA…YGEGWLVKVR (83 aa). An N6-lipoyllysine modification is found at Lys65.

The protein belongs to the GcvH family. As to quaternary structure, the glycine cleavage system is composed of four proteins: P, T, L and H. Requires (R)-lipoate as cofactor.

The glycine cleavage system catalyzes the degradation of glycine. The H protein shuttles the methylamine group of glycine from the P protein to the T protein. This Cyanothece sp. (strain PCC 7425 / ATCC 29141) protein is Glycine cleavage system H protein.